Reading from the N-terminus, the 532-residue chain is MAKIKRALISVSDKTGLVPFCQGLAEHGVSFLSTGGTARLLRESGLDVMDVSEFTGFPEMLDGRVKTLHPKVHGGLLGLRDNASHQQQMGEHGIEPIDMVVVNLYPFEATVAKEGCTLEEAIENIDIGGPSMLRSAAKNYRSVTVVTDPADYARVLESLRAHDGQCDAGLNAQLARKVYARTAAYDAAISNWLSALDNEGRPGAFPETYTVQFKKVQGMRYGENPHQSAAFYAESPPSEEASLATATQLQGKELSFNNIHDANGALELVKEFSKPAAVVVKHANPCGVAVHDGDLLAAYRMARDTDPVSAFGGIIALNRCVDVAVAKEIAQLFVEVIIAPEYDEQALELFATKKNLRLLRVPNIGVATAVSTMDLKRVTGGLLLQDRDLKQLPEGSLKVVTERAPSEAEMRDLLFAWKVVKHVKSNAIVYAKEQRTLGVGAGQMSRVDASRIAVWKAQDTAHTAGLRENPLLGAAMASDAFFPFRDGVDAAAKAGAKAVIQPGGSVRDEEVIAAANEHGMAMVFTGMRHFKH.

The 147-residue stretch at 1 to 147 folds into the MGS-like domain; that stretch reads MAKIKRALIS…KNYRSVTVVT (147 aa).

This sequence belongs to the PurH family.

It catalyses the reaction (6R)-10-formyltetrahydrofolate + 5-amino-1-(5-phospho-beta-D-ribosyl)imidazole-4-carboxamide = 5-formamido-1-(5-phospho-D-ribosyl)imidazole-4-carboxamide + (6S)-5,6,7,8-tetrahydrofolate. It carries out the reaction IMP + H2O = 5-formamido-1-(5-phospho-D-ribosyl)imidazole-4-carboxamide. It participates in purine metabolism; IMP biosynthesis via de novo pathway; 5-formamido-1-(5-phospho-D-ribosyl)imidazole-4-carboxamide from 5-amino-1-(5-phospho-D-ribosyl)imidazole-4-carboxamide (10-formyl THF route): step 1/1. The protein operates within purine metabolism; IMP biosynthesis via de novo pathway; IMP from 5-formamido-1-(5-phospho-D-ribosyl)imidazole-4-carboxamide: step 1/1. The chain is Bifunctional purine biosynthesis protein PurH from Magnetococcus marinus (strain ATCC BAA-1437 / JCM 17883 / MC-1).